Consider the following 201-residue polypeptide: Recombination protein RecR (201 aa).

A C4-type zinc finger spans residues 57-72 (CTHCRTFTEEESCAIC). Positions 81–176 (GFLCVVEQPS…KVSRIAHGIP (96 aa)) constitute a Toprim domain.

The protein belongs to the RecR family.

May play a role in DNA repair. It seems to be involved in an RecBC-independent recombinational process of DNA repair. It may act with RecF and RecO. This Histophilus somni (strain 2336) (Haemophilus somnus) protein is Recombination protein RecR.